The following is a 159-amino-acid chain: UPF0262 protein PHZ_c2197 (159 aa).

Belongs to the UPF0262 family.

The protein is UPF0262 protein PHZ_c2197 of Phenylobacterium zucineum (strain HLK1).